A 462-amino-acid chain; its full sequence is 3-ketoacyl-CoA thiolase 2, peroxisomal (462 aa).

The transit peptide at 1-34 (MEKAIERQRVLLEHLRPSSSSSHNYEASLSASAC) directs the protein to the peroxisome. The active-site Acyl-thioester intermediate is the C138. C138 and C192 are joined by a disulfide. Residues H393 and C425 each act as proton acceptor in the active site.

Belongs to the thiolase-like superfamily. Thiolase family. As to quaternary structure, forms homodimers. As to expression, accumulates in etiolated cotyledons and in seedlings, also present in roots, flowers and siliques (at protein level). High levels in wounded leaves.

The protein resides in the peroxisome. Its subcellular location is the glyoxysome. The enzyme catalyses an acyl-CoA + acetyl-CoA = a 3-oxoacyl-CoA + CoA. The protein operates within lipid metabolism; fatty acid metabolism. Functionally, involved in long chain fatty-acid beta-oxidation prior to gluconeogenesis during germination and subsequent seedling growth. Confers sensitivity to 2,4-dichlorophenoxybutiric acid (2,4-DB). Required for local and systemic induction of jasmonic acid (JA) biosynthesis after wounding. Seems to be involved in JA biosynthesis during senescence. May be involved in the positive regulation of abscisic acid-activated signaling pathway. This Arabidopsis thaliana (Mouse-ear cress) protein is 3-ketoacyl-CoA thiolase 2, peroxisomal (PED1).